A 232-amino-acid chain; its full sequence is Small ribosomal subunit protein uS2 (232 aa).

It belongs to the universal ribosomal protein uS2 family.

This chain is Small ribosomal subunit protein uS2, found in Natranaerobius thermophilus (strain ATCC BAA-1301 / DSM 18059 / JW/NM-WN-LF).